The primary structure comprises 187 residues: Ion-translocating oxidoreductase complex subunit B (187 aa).

The interval methionine 1–alanine 26 is hydrophobic. One can recognise a 4Fe-4S domain in the interval glutamate 32 to valine 90. [4Fe-4S] cluster contacts are provided by cysteine 49, cysteine 52, cysteine 57, cysteine 73, cysteine 115, cysteine 118, cysteine 121, cysteine 125, cysteine 145, cysteine 148, cysteine 151, and cysteine 155. 4Fe-4S ferredoxin-type domains are found at residues lysine 106–lysine 135 and alanine 136–valine 165.

It belongs to the 4Fe4S bacterial-type ferredoxin family. RnfB subfamily. The complex is composed of six subunits: RnfA, RnfB, RnfC, RnfD, RnfE and RnfG. Requires [4Fe-4S] cluster as cofactor.

The protein localises to the cell inner membrane. Part of a membrane-bound complex that couples electron transfer with translocation of ions across the membrane. This Aeromonas hydrophila subsp. hydrophila (strain ATCC 7966 / DSM 30187 / BCRC 13018 / CCUG 14551 / JCM 1027 / KCTC 2358 / NCIMB 9240 / NCTC 8049) protein is Ion-translocating oxidoreductase complex subunit B.